Reading from the N-terminus, the 452-residue chain is Isocitrate dehydrogenase [NADP], mitochondrial (452 aa).

A mitochondrion-targeting transit peptide spans 1-39; it reads MAGYLRAVSSLCRASGSARTWAPAALTVPSWPEQPRRHY. N6-acetyllysine occurs at positions 45, 48, 67, and 69. An N6-acetyllysine; alternate mark is found at lysine 80 and lysine 106. An N6-succinyllysine; alternate mark is found at lysine 80 and lysine 106. NADP(+)-binding positions include 115–117 and arginine 122; that span reads TIT. Residue threonine 117 coordinates D-threo-isocitrate. Residues 134-140 and arginine 149 contribute to the D-threo-isocitrate site; that span reads SPNGTIR. Lysine 155 carries the post-translational modification N6-acetyllysine. An N6-acetyllysine; alternate modification is found at lysine 166. Lysine 166 bears the N6-succinyllysine; alternate mark. Arginine 172 is a binding site for D-threo-isocitrate. An N6-acetyllysine; alternate mark is found at lysine 180 and lysine 193. Residues lysine 180 and lysine 193 each carry the N6-succinyllysine; alternate modification. At lysine 199 the chain carries N6-acetyllysine. Lysine 256 bears the N6-acetyllysine; alternate mark. Position 256 is an N6-succinyllysine; alternate (lysine 256). N6-acetyllysine occurs at positions 263, 272, 275, and 280. The residue at position 282 (lysine 282) is an N6-acetyllysine; alternate. N6-succinyllysine; alternate is present on lysine 282. Aspartate 291 is a binding site for Mn(2+). Lysine 299 is an NADP(+) binding site. Aspartate 314 provides a ligand contact to Mn(2+). NADP(+) is bound by residues 349–354 and asparagine 367; that span reads GTVTRH. Residue lysine 384 is modified to N6-acetyllysine; alternate. At lysine 384 the chain carries N6-succinyllysine; alternate. Lysine 400, lysine 413, and lysine 442 each carry N6-acetyllysine.

This sequence belongs to the isocitrate and isopropylmalate dehydrogenases family. In terms of assembly, homodimer. Mg(2+) is required as a cofactor. Requires Mn(2+) as cofactor. Post-translationally, acetylation at Lys-413 dramatically reduces catalytic activity. Deacetylated by SIRT3. As to expression, predominantly expressed in heart, liver and kidney. Expressed in activated B lymphocytes.

The protein localises to the mitochondrion. The catalysed reaction is D-threo-isocitrate + NADP(+) = 2-oxoglutarate + CO2 + NADPH. In terms of biological role, plays a role in intermediary metabolism and energy production. It may tightly associate or interact with the pyruvate dehydrogenase complex. The protein is Isocitrate dehydrogenase [NADP], mitochondrial (Idh2) of Mus musculus (Mouse).